The following is a 115-amino-acid chain: Non-specific lipid-transfer protein Cor a 8.0101 (115 aa).

The signal sequence occupies residues 1 to 23 (MGSLKLVCAVLLCMMVAAPVARA). 4 cysteine pairs are disulfide-bonded: C27–C74, C37–C51, C52–C97, and C72–C111.

The protein belongs to the plant LTP family. Monomer. Expressed in seed (at protein level). Expressed in seed.

Functionally, plant non-specific lipid-transfer proteins transfer phospholipids as well as galactolipids across membranes. May play a role in wax or cutin deposition in the cell walls of expanding epidermal cells and certain secretory tissues. The protein is Non-specific lipid-transfer protein Cor a 8.0101 of Corylus avellana (European hazel).